A 487-amino-acid chain; its full sequence is MAAAAPASAGTKGVVRQVIGPVLDVEFPAGKLPKILNALRIEGTNTAGQPVALTAEVQQLLGDHRVRAVAMSGTDGLVRGMEALDTGAPISVPVGEATLGRIFNVLGEPVDEQGPVNASATAPIHRSAPKLTELETKPKVFETGIKVIDLLAPYRQGGKVGLFGGAGVGKTVLIQELINNIAKEHGGVSVFGGVGERTREGNDLYEEFKDSGVINAEDLSKSKVALCYGQMNEPPGARMRVGLSALTMAEHFRDVNKQDVLLFVDNIFRFVQAGSEVSALLGRMPSAVGYQPTLGTDVGELQERITSTLEGSITSIQAVYVPADDLTDPAPATTFAHLDATTVLSRGLASKGIYPAVDPLDSTSTMLQPAVVGEEHYKTARAVQSTLQRYKELQDIIAILGLDELSEDDRRTVDRARKIEKFLSQPFFVAEIFTGMPGVYVKLEETIAGFNQILAGELDHLPEQAFYLVGNIDQVKAKAEKIAAEAK.

Residue 164–171 (GGAGVGKT) participates in ATP binding.

The protein belongs to the ATPase alpha/beta chains family. F-type ATPases have 2 components, CF(1) - the catalytic core - and CF(0) - the membrane proton channel. CF(1) has five subunits: alpha(3), beta(3), gamma(1), delta(1), epsilon(1). CF(0) has four main subunits: a(1), b(1), b'(1) and c(9-12).

It is found in the cellular thylakoid membrane. The catalysed reaction is ATP + H2O + 4 H(+)(in) = ADP + phosphate + 5 H(+)(out). Functionally, produces ATP from ADP in the presence of a proton gradient across the membrane. The catalytic sites are hosted primarily by the beta subunits. This chain is ATP synthase subunit beta, found in Synechococcus sp. (strain WH7803).